We begin with the raw amino-acid sequence, 457 residues long: Multidrug resistance protein MdtK (457 aa).

12 helical membrane-spanning segments follow: residues L11–V31, I53–A73, W93–I113, A127–A147, G160–Y180, G189–V209, L243–V263, I276–T296, A314–V334, V350–I370, I387–A407, and P418–L438.

This sequence belongs to the multi antimicrobial extrusion (MATE) (TC 2.A.66.1) family. MdtK subfamily.

It is found in the cell inner membrane. In terms of biological role, multidrug efflux pump that functions probably as a Na(+)/drug antiporter. The protein is Multidrug resistance protein MdtK of Escherichia coli O17:K52:H18 (strain UMN026 / ExPEC).